The primary structure comprises 144 residues: Ferredoxin-thioredoxin reductase catalytic chain, chloroplastic (144 aa).

A chloroplast-targeting transit peptide spans 1–31 (MKALQASIAYSFPISSPAASPRRFSRVIRAQ). Cys-83 contacts [4Fe-4S] cluster. The active-site Nucleophile is Cys-85. Cys-85 and Cys-115 are disulfide-bonded. [4Fe-4S] cluster is bound by residues Cys-102, Cys-104, and Cys-113.

It belongs to the ferredoxin thioredoxin reductase beta subunit family. In terms of assembly, heterodimer of subunit A (variable subunit) and subunit B (catalytic subunit). Heterodimeric FTR forms a complex with ferredoxin and thioredoxin. Requires [4Fe-4S] cluster as cofactor.

Its subcellular location is the plastid. The protein resides in the chloroplast. The catalysed reaction is [thioredoxin]-disulfide + 2 reduced [2Fe-2S]-[ferredoxin] + 2 H(+) = [thioredoxin]-dithiol + 2 oxidized [2Fe-2S]-[ferredoxin]. Functionally, catalytic subunit of the ferredoxin-thioredoxin reductase (FTR), which catalyzes the two-electron reduction of thioredoxins by the electrons provided by reduced ferredoxin. The chain is Ferredoxin-thioredoxin reductase catalytic chain, chloroplastic (FTRC) from Spinacia oleracea (Spinach).